A 434-amino-acid chain; its full sequence is Eukaryotic translation initiation factor 3 subunit E (434 aa).

Positions 219 to 392 constitute a PCI domain; sequence FFNHPKGRDL…GHVVMGTQPL (174 aa).

The protein belongs to the eIF-3 subunit E family. Component of the eukaryotic translation initiation factor 3 (eIF-3) complex. The eIF-3 complex interacts with pix. Interacts with mxt.

The protein localises to the cytoplasm. Functionally, component of the eukaryotic translation initiation factor 3 (eIF-3) complex, which is involved in protein synthesis of a specialized repertoire of mRNAs and, together with other initiation factors, stimulates binding of mRNA and methionyl-tRNAi to the 40S ribosome. The eIF-3 complex specifically targets and initiates translation of a subset of mRNAs involved in cell proliferation. The protein is Eukaryotic translation initiation factor 3 subunit E (eIF3-S6) of Drosophila grimshawi (Hawaiian fruit fly).